A 1047-amino-acid polypeptide reads, in one-letter code: MELCQPTSLSDHDQPASGPQRGVMGLVGPDAPRGWSEEPEEHAQLQRWPEGPNAPICWPEEVEEPHAPSRWAKEPNAPRCSSQEPDESCHLAEELEESDSPRCWPQEPDTPCHLAKELEEPDAPRCLPQEPDTPCYLAKELEEPNIPRCWPQEPDVPCHLAKELEEPDAPRCWPQEPDAFCHLLKEVEEPDALRCWLQGPDAPCHLAKELEDLDSPRCWPQEPDESCHLAKELEEPDAPCHLAKELEEPDAPRCWPQEPDVPCLLAKKWEESDAPCLLTEELEEPDALHCWPQESEAPCLLAKELEEPDASHSCPQEADTGCLSAKEPEEPDVSHLWQGVPDAPCLLVKEPEEADALHCCWPEESEEPDALNPPCFWANEPDEPDPSRCWSEEPQVLCLWPEEQNTKRCWQEEPDAPCFWPEDREEPIVSCLQFKEPEKPKVRSSWPEELEDCCPTRGLPLEPLLADGELLQACPGPPSDPGPALSLPSEPGTAQEEGARLRAVFDALDRDGDGFVRIEDFIQFATVYGAEQVKDLTQYLDPSGLGVISFEDFYQGIVAIRNGDPDGQLYSVEPVQDEETPACADEFDDFVTYEANEVTDSAYMGSESTYSECETFTDEDTSTLVHPELQPEGDVDSAGGSGVPSECLDTMEEPDHGALLLLPGRSRPHSQAVVMVIGSEEHFEDYGEGNEAELSPETLCDGDGEDPAFLTPSPAKRLSSRKVARYLHQSGTLTMEALEDPPPEPVECPEEDIADKVIFLERRVSELEKDSAAAGEQHGRLRQENLQLVHRANALEEQLKEQEFRAQEKVLEETRKQKELLCKMEREKSIEIENLQARLQQLDEENSELRSCTPCLKANIERLEEEKQKMLDEIEELTQRLSEEQENKRKMGDRLSHERHQFQRDKEATQELIEDLRKQLEHLQLLRLEVEQRRGRSSSLGLQEYNSRARESELEQEVRRLKQDNRNLKEQNDELNGQIITLSIQGAKSLFSTSFSESLAAEISSVSRDELMEAIQKQEEINFRLQDYIDRIIVAILETNPSILEVK.

Disordered stretches follow at residues methionine 1–glutamate 107, serine 311–histidine 335, and proline 475–glutamate 496. The segment covering glutamate 64 to lysine 73 has biased composition (basic and acidic residues). 2 consecutive EF-hand domains span residues glutamate 496–glutamate 531 and tyrosine 528–glycine 563. Ca(2+) contacts are provided by aspartate 509, aspartate 511, aspartate 513, aspartate 520, aspartate 541, serine 543, and aspartate 552. Phosphoserine is present on residues serine 641, serine 765, and serine 829. The stretch at glutamate 750–glutamine 985 forms a coiled coil. The tract at residues glycine 775 to glutamine 879 is ARF-binding domain (ABD). The disordered stretch occupies residues serine 882–lysine 906. A phosphoserine mark is found at serine 938 and serine 939. The FIP-RBD domain maps to glutamine 985–lysine 1047.

As to quaternary structure, homodimer. Interacts with RAB11A; the interaction is direct and is required for the recruitment to endosomes. Interacts with RAB11B. Forms a ternary complex with RAB11A and dynein intermediate chain DYNC1LI1; RAB11FIP3 links RAB11A to dynein and the interaction regulates endocytic trafficking. Interacts with dynein intermediate chain and dynactin (DCTN1); the interaction activates dynein processivity. Interacts with ARF6 and EXOC7; the interaction serves for recruitment and tethering of recycling endosomes-derived vesicles to the cleavage furrow/midbody. Interacts with RACGAP1/MgcRacGAP; the interaction occurs at late telophase and is required for recruitment and tethering of recycling endosomes-derived vesicles to the cleavage furrow/midbody. Forms a complex with RAB11A and Rabin8/RAB3IP, probably a heterohexamer with two of each protein subunit, where RAB3IP and RAB11FIP3 simultaneously bind to RAB11A; the complex promotes preciliary trafficking. Forms a complex containing RAB11A, ASAP1, RAB3IP, RAP11FIP3 and ARF4; the complex promotes preciliary trafficking; the complex binds to RHO in photoreceptor cells and promotes RHO ciliary transport. Interacts with RAB11FIP4. Interacts with RAB25.

It is found in the recycling endosome membrane. Its subcellular location is the cytoplasm. The protein resides in the cytoskeleton. It localises to the microtubule organizing center. The protein localises to the centrosome. It is found in the cleavage furrow. Its subcellular location is the midbody. The protein resides in the golgi apparatus membrane. It localises to the golgi apparatus. The protein localises to the trans-Golgi network membrane. Downstream effector molecule for Rab11 GTPase which is involved in endocytic trafficking, cytokinesis and intracellular ciliogenesis by participating in membrane delivery. Recruited by Rab11 to endosomes where it links Rab11 to dynein motor complex. The functional Rab11-RAB11FIP3-dynein complex regulates the movement of peripheral sorting endosomes (SE) along microtubule tracks toward the microtubule organizing center/centrosome, generating the endocytic recycling compartment (ERC) during interphase of cell cycle. Facilitates the interaction between dynein and dynactin and activates dynein processivity. Binding with ASAP1 is needed to regulate the pericentrosomal localization of recycling endosomes. The Rab11-RAB11FIP3 complex is also implicated in the transport during telophase of vesicles derived from recycling endosomes to the cleavage furrow via centrosome-anchored microtubules, where the vesicles function to deliver membrane during late cytokinesis and abscission. The recruitment of Rab11-RAB11FIP3-containing endosomes to the cleavage furrow and tethering to the midbody is co-mediated by RAB11FIP3 interaction with ARF6-exocyst and RACGAP1-MKLP1 tethering complexes. Also involved in the Rab11-Rabin8-Rab8 ciliogenesis cascade by facilitating the orderly assembly of a ciliary targeting complex containing Rab11, ASAP1, Rabin8/RAB3IP, RAB11FIP3 and ARF4, which directs preciliary vesicle trafficking to mother centriole and ciliogenesis initiation. Also promotes the activity of Rab11 and ASAP1 in the ARF4-dependent Golgi-to-cilia transport of the sensory receptor rhodopsin. Competes with WDR44 for binding to Rab11, which controls intracellular ciliogenesis pathway. May play a role in breast cancer cell motility by regulating actin cytoskeleton. This Mus musculus (Mouse) protein is Rab11 family-interacting protein 3.